Here is a 210-residue protein sequence, read N- to C-terminus: 2-hydroxy-3-keto-5-methylthiopentenyl-1-phosphate phosphatase (210 aa).

Belongs to the HAD-like hydrolase superfamily. MtnX family.

The enzyme catalyses 2-hydroxy-5-methylsulfanyl-3-oxopent-1-enyl phosphate + H2O = 1,2-dihydroxy-5-(methylsulfanyl)pent-1-en-3-one + phosphate. Its pathway is amino-acid biosynthesis; L-methionine biosynthesis via salvage pathway; L-methionine from S-methyl-5-thio-alpha-D-ribose 1-phosphate: step 4/6. Dephosphorylates 2-hydroxy-3-keto-5-methylthiopentenyl-1-phosphate (HK-MTPenyl-1-P) yielding 1,2-dihydroxy-3-keto-5-methylthiopentene (DHK-MTPene). The polypeptide is 2-hydroxy-3-keto-5-methylthiopentenyl-1-phosphate phosphatase (Microcystis aeruginosa (strain NIES-843 / IAM M-2473)).